The chain runs to 358 residues: Arginine kinase (358 aa).

A Phosphagen kinase N-terminal domain is found at 6–88 (SVEELWAKLD…LDAVIKEYHK (83 aa)). Residue 61 to 65 (GVGIY) coordinates substrate. Residues 116–353 (YIVSTRVRVG…EACLAKEKEL (238 aa)) form the Phosphagen kinase C-terminal domain. ATP contacts are provided by residues 119–123 (STRVR) and H182. E222 provides a ligand contact to substrate. R226 is an ATP binding site. C269 is a substrate binding site. Residues 278-282 (RASVH) and 306-311 (RGIHGE) contribute to the ATP site. A substrate-binding site is contributed by E311.

This sequence belongs to the ATP:guanido phosphotransferase family. Monomer.

It carries out the reaction L-arginine + ATP = N(omega)-phospho-L-arginine + ADP + H(+). The chain is Arginine kinase from Haliotis madaka (Giant abalone).